The sequence spans 641 residues: MGKIIGIDLGTTNSCVSIMDGGKARVIENSEGDRTTPSIVAYTKDGEVLVGASAKRQAVTNPKNTFYAVKRLIGRKFTDAEVQKDISHVPYGILAHDNGDAWVQTSDAKRMAPQEISARVLEKMKKTAEDYLGEKVTEAVITVPAYFNDSQRQATKDAGRIAGLDVKRIINEPTAAALAYGLDKKGGDRKIAVYDLGGGTFDVSIIEIAEVDGEKQFEVLATNGDTFLGGEDFDNRVIEYLVDEFNKDQGIDLRKDPLALQRLKDAAERAKIELSSSQQTEVNLPYVTADASGPKHLNIKLTRAKLEALVEDLVKKSIEPCRTALNDAGLRASDINEVILVGGQTRMPKVQQAVADFFGKEPRKDVNPDEAVAVGAAIQGGVLAGDVKDVLLLDVTPLSLGIETMGGVFTKIIEKNTTIPTKASQTFSTAEDNQSAVTVHVLQGEREQARFNKSLAKFDLSGIEPAPRGMPQVEVSFDIDANGILHVSAKDKKTNKEQKVEIKAGSGLSDEEIQRMVADAEANREEDKKFHELVQARNQADGLIHATRTAITEHGSKVGGDVIGKVEAALSDLETAVKGDDKAQIEARTKTLEEAGQSLYAAAAAAEQGGSADAASGNAQASKAADDVVDAEFTEVKDDKK.

T200 bears the Phosphothreonine; by autocatalysis mark. Positions 605–623 (AAEQGGSADAASGNAQASK) are enriched in low complexity. Positions 605 to 628 (AAEQGGSADAASGNAQASKAADDV) are disordered.

The protein belongs to the heat shock protein 70 family.

Functionally, acts as a chaperone. The protein is Chaperone protein DnaK of Xanthomonas oryzae pv. oryzae (strain KACC10331 / KXO85).